The sequence spans 583 residues: Phosphoglucomutase, cytoplasmic 2 (583 aa).

Residues arginine 25 and serine 124 each contribute to the alpha-D-glucose 1,6-bisphosphate site. Residue serine 124 is the Phosphoserine intermediate of the active site. Residues serine 124, aspartate 300, aspartate 302, and aspartate 304 each coordinate Mg(2+). Serine 124 is subject to Phosphoserine. Alpha-D-glucose 1,6-bisphosphate contacts are provided by aspartate 304, arginine 305, threonine 368, glutamate 387, serine 389, and lysine 400.

This sequence belongs to the phosphohexose mutase family. As to quaternary structure, monomer. Mg(2+) is required as a cofactor.

The protein resides in the cytoplasm. It catalyses the reaction alpha-D-glucose 1-phosphate = alpha-D-glucose 6-phosphate. The catalysed reaction is O-phospho-L-seryl-[protein] + alpha-D-glucose 1-phosphate = alpha-D-glucose 1,6-bisphosphate + L-seryl-[protein]. It carries out the reaction alpha-D-glucose 1,6-bisphosphate + L-seryl-[protein] = O-phospho-L-seryl-[protein] + alpha-D-glucose 6-phosphate. Its function is as follows. Catalyzes the reversible isomerization of alpha-D-glucose 1-phosphate to alpha-D-glucose 6-phosphate. The mechanism proceeds via the intermediate compound alpha-D-glucose 1,6-bisphosphate. This enzyme participates in both the breakdown and synthesis of glucose. This Zea mays (Maize) protein is Phosphoglucomutase, cytoplasmic 2.